Reading from the N-terminus, the 117-residue chain is Large ribosomal subunit protein bL19 (117 aa).

This sequence belongs to the bacterial ribosomal protein bL19 family.

Its function is as follows. This protein is located at the 30S-50S ribosomal subunit interface and may play a role in the structure and function of the aminoacyl-tRNA binding site. In Shewanella baltica (strain OS155 / ATCC BAA-1091), this protein is Large ribosomal subunit protein bL19.